We begin with the raw amino-acid sequence, 182 residues long: Ribosome maturation factor RimM (182 aa).

The region spanning E102–F182 is the PRC barrel domain.

It belongs to the RimM family. In terms of assembly, binds ribosomal protein uS19.

The protein resides in the cytoplasm. In terms of biological role, an accessory protein needed during the final step in the assembly of 30S ribosomal subunit, possibly for assembly of the head region. Essential for efficient processing of 16S rRNA. May be needed both before and after RbfA during the maturation of 16S rRNA. It has affinity for free ribosomal 30S subunits but not for 70S ribosomes. The chain is Ribosome maturation factor RimM from Salmonella gallinarum (strain 287/91 / NCTC 13346).